The chain runs to 226 residues: Probable septum site-determining protein MinC (226 aa).

It belongs to the MinC family. As to quaternary structure, interacts with MinD and FtsZ.

Functionally, cell division inhibitor that blocks the formation of polar Z ring septums. Rapidly oscillates between the poles of the cell to destabilize FtsZ filaments that have formed before they mature into polar Z rings. Prevents FtsZ polymerization. In Bacillus velezensis (strain DSM 23117 / BGSC 10A6 / LMG 26770 / FZB42) (Bacillus amyloliquefaciens subsp. plantarum), this protein is Probable septum site-determining protein MinC.